We begin with the raw amino-acid sequence, 454 residues long: UPF0210 protein BLA_0552 (454 aa).

It belongs to the UPF0210 family. As to quaternary structure, homodimer.

This chain is UPF0210 protein BLA_0552, found in Bifidobacterium animalis subsp. lactis (strain AD011).